The chain runs to 663 residues: Protein pat-12 (663 aa).

The span at 1-15 shows a compositional bias: polar residues; it reads MTSHIATETSVNRWS. 4 disordered regions span residues 1–78, 367–430, 517–546, and 597–663; these read MTSH…SGDY, RFEE…GQET, FRRG…DYRR, and PMPA…RRRR. Residues 367 to 380 are compositionally biased toward basic and acidic residues; that stretch reads RFEETRRTEEVERR. Over residues 381–400 the composition is skewed to basic residues; the sequence is VQRREKKERRSRHHSSSRHH. The segment covering 517–526 has biased composition (polar residues); that stretch reads FRRGSQQQVS. Composition is skewed to basic and acidic residues over residues 620-640 and 649-663; these read FNKE…KPVD and NYKR…RRRR.

In terms of assembly, interacts with vab-10 (via plankin domain). Isoform a: Expressed in the uterus, the vulva, the rectum, mechanosensory neurons and in head and tail neurons. Isoform e: Expressed in spermatheca and weakly in the vulva. Isoform f: Expressed in spermatheca and weakly in the vulva. Isoform i: Expressed in spermatheca and weakly in the vulva.

It localises to the apical cell membrane. The protein resides in the basal cell membrane. Its subcellular location is the cytoplasm. It is found in the cell junction. The protein localises to the hemidesmosome. It localises to the cell membrane. The protein resides in the cytoskeleton. Functionally, required for embryonic morphology and development. Plays both a functional and a structural role in the maintenance and probably biogenesis of fibrous organelles, a hemidesomosome-like junction structure, which ensures muscle stability and muscle connection to the external cuticle. The polypeptide is Protein pat-12 (Caenorhabditis elegans).